Reading from the N-terminus, the 361-residue chain is Nicotinate-nucleotide--dimethylbenzimidazole phosphoribosyltransferase (361 aa).

The Proton acceptor role is filled by E315.

This sequence belongs to the CobT family.

It catalyses the reaction 5,6-dimethylbenzimidazole + nicotinate beta-D-ribonucleotide = alpha-ribazole 5'-phosphate + nicotinate + H(+). The protein operates within nucleoside biosynthesis; alpha-ribazole biosynthesis; alpha-ribazole from 5,6-dimethylbenzimidazole: step 1/2. Its function is as follows. Catalyzes the synthesis of alpha-ribazole-5'-phosphate from nicotinate mononucleotide (NAMN) and 5,6-dimethylbenzimidazole (DMB). The sequence is that of Nicotinate-nucleotide--dimethylbenzimidazole phosphoribosyltransferase from Clostridium perfringens (strain 13 / Type A).